The primary structure comprises 1977 residues: MSTKQSPALQLAEGQLTKLTSESEEIRMRALDQIETRFIRCLQLGEPIQFKPVLLLKQLIRWFGYTPPLVPDRVLAMIMELLRSEYAEAVIRKIPYERFKAELQKVRRVLHKQESKRVSELLDDMNLLLLEKYNIDRVTPSVSSLSSNDIPSQATESADSSSNQIYDNLKPEDYEPSWSHPCLDDVATMKSMIDLPRNSVELQLQLTELIIRMGDYPTEYFLQPPFVFLHLVQLQTMTDGSLIHVNRALIACLRLLQQRILLRRNTLSYADRFDPPSRPKQVKVVSALVILLENCMKLIRPLLFSCTNDNWHIMELIVEIVRTHDVLSSKIPLVSITLIADAVKSLLAYCNSVEGSCMTQLMDSLRIPRLQSLILNGVLHDMVALNINYDKRMDRRQAKALIQPIVLDSAYLSGMPERMKSLNTLISSLDSGPSPDEELIKLKRAYSVALNQLHPNTELTGSLLIQKYRQVCLVLVQLGSETLVKQLFGAVVKCIPFYAGNLKLRKDADELLYTLVDLPALKLRSLIYRLMIKSTVAHFHSFMNKTVYMTGCSNVDLIRQHILGVPLTPLLLRRMIIQSSEANTSERMQQWCLDYPIMIMKLNAILAPQDFSVVFPLLLPVLPLLISRSVTHKILHNVIWNVLEPDSSRLDPQLMLRGYVYFMFHPDGEVRSEATTTIAYVLQCQEQTNRYLPTASNVPVEHIANDLCIIQPPFCYRSIFIKCSDERFQGQRSLDALFRLLQAKDIKSNIRKSTMTQLNVLLRNWRACEEFSTKEDGYRLIMESLHNALKKGNDTDILLPTVSILMKLLFNDDEFRLEVANTFGVYTLLLRALFLFPHLEQLRQDVSICLFQMLFQNCITSTEDKLVLNANMEPLILPVTYEIEHKVIPTAVTEGLELQQNVEATHFGRDRAKAAQHWRLYMAYRVCQVPSSITLESVSALDIRESLKIKMADLALVRSSDLNEQLSCQFIAAENCSKHEDLQKTVSAIQLFLVVLRNSLSDTVAENLWKLIHKYIRLAPGNEADDKVYKSMLDLCVTCIRFSQPHAINGLSYALETDHHHSFQLLLHDSQISLDKLFLICQCMMQLLSNELSDDSMNWYGKFFMQLSAVAKTHFELRQLQHVRCILCMLRFVSERNLKFSNAQLMSYSQHFIQLSSNLRTSTQTGSEWQRDCLYIICQLQIHLIYQEPKASSKASIPNDVGASYKVLRYFLTLCGHGDSEVRALSWVSLANWITICGSQVAEILPRLDFLPGGLPACCLTTLTDAHEMMLIRELAGRVFILLMPLIGAESSLELLRKHDLLKTAYNSLKAIHDTPWMFKKIVGERHSCEVISCYVAICTKMVAMKPEWCAALCGHSLMSGLSDVMKKLKSQASCSIPLVELCASQICELYSMCYTNNFEFLKMTICRDSVFLQNYLTLINDVLSLECPEYMVIPLLKMFLIFCTDSNSNSFLIEQIKNKPSLFMDFFLFGLHVKLINSPFQRFTLSALSLVFTKAQLAAYDISMLSELEKFELAFSDPDIAKDGKQEFESKKKQSVSQCIYDESSDNSDDNKQRPNHAIQATNAAIIIFHRLDQLFDRYYLSKALNFLELPAVGQVQVCEALGELLKASTWAVKAAGESKLLGKVVHILDDFLNDEKIGNAAVYVKRVGPHKAQSIISNLLVLINMLSQWHSSPNSEIIQTSMAANIAKILIRIWPWLSHSYHLKKVTVQLIMFLTEHSFEMCKQISLLQSGHAQSLLHLMARVADFETTKKEIPNKEPSLNMVPALRVMVNCCCCTEGRLSLSKMNLLDMFDTILPANPCSTHLKVRPPVLIAWLGFWEVFSRYDVGGKACHLQSLINTIRRSPPLSHKRILCLRILRNMCFFNGNRPRLVELADFINLLRDILEQRVQKAPTSEKNGLNSFEEHRLAVLMLWKLFGFGAKYKGMLRGTKLFKLLIGLRVEMSVVFSEEENKYAGVPYANDLAKLLEKLMESMRQ.

The tract at residues 141 to 166 is disordered; the sequence is SVSSLSSNDIPSQATESADSSSNQIY.

This sequence belongs to the rotatin family. Interacts with Rcd4;this complex is recruited to daughter centrioles before their conversion to centrosomes.

The protein localises to the cytoplasm. The protein resides in the cytoskeleton. Its subcellular location is the microtubule organizing center. It localises to the centrosome. It is found in the centriole. Its function is as follows. Participes in the structural integrity of both centrioles and basal bodies and in centriole cohesion. Participates in the later stages of centriole assembly through the interaction with Rcd4 leading to the centriole to centrosome conversion. In Drosophila melanogaster (Fruit fly), this protein is Protein rotatin homolog.